The following is an 823-amino-acid chain: Valine--tRNA ligase (823 aa).

A 'HIGH' region motif is present at residues 52-62 (PTVSGVLHMGH). Residues 549 to 553 (KMSKS) carry the 'KMSKS' region motif. Residue lysine 552 coordinates ATP.

It belongs to the class-I aminoacyl-tRNA synthetase family. ValS type 2 subfamily. As to quaternary structure, monomer.

It localises to the cytoplasm. It carries out the reaction tRNA(Val) + L-valine + ATP = L-valyl-tRNA(Val) + AMP + diphosphate. Functionally, catalyzes the attachment of valine to tRNA(Val). As ValRS can inadvertently accommodate and process structurally similar amino acids such as threonine, to avoid such errors, it has a 'posttransfer' editing activity that hydrolyzes mischarged Thr-tRNA(Val) in a tRNA-dependent manner. The chain is Valine--tRNA ligase from Anaplasma marginale (strain St. Maries).